An 83-amino-acid chain; its full sequence is Small ribosomal subunit protein bS20 (83 aa).

This sequence belongs to the bacterial ribosomal protein bS20 family.

Its function is as follows. Binds directly to 16S ribosomal RNA. This Staphylococcus carnosus (strain TM300) protein is Small ribosomal subunit protein bS20.